The sequence spans 284 residues: Putative mitochondrial carrier protein PET8 (284 aa).

Solcar repeat units lie at residues 2 to 75, 92 to 178, and 192 to 271; these read NTFF…MKVK, IDTT…LKKT, and KGAI…VHSL. Helical transmembrane passes span 5–25, 50–70, 98–118, 153–169, 194–214, and 252–272; these read FLSL…FFPI, GLGS…ISYD, MLSS…AEVV, GWST…CIQF, AICG…LDFL, and MWIS…HSLL.

Belongs to the mitochondrial carrier (TC 2.A.29) family.

Its subcellular location is the mitochondrion inner membrane. In Saccharomyces cerevisiae (strain ATCC 204508 / S288c) (Baker's yeast), this protein is Putative mitochondrial carrier protein PET8 (PET8).